Here is a 1074-residue protein sequence, read N- to C-terminus: Transmembrane protein 132E (1074 aa).

The N-terminal stretch at 1–23 is a signal peptide; sequence MAPGMSGRRGAALLCLSVLLAHA. At 26–894 the chain is on the extracellular side; it reads RSHPASPSPP…LTDLEIGMYA (869 aa). N-linked (GlcNAc...) asparagine glycans are attached at residues Asn-70 and Asn-91. 2 disordered regions span residues 205 to 224 and 243 to 266; these read PAAP…PEAA and GGCG…ESPT. The segment covering 247–262 has biased composition (low complexity); it reads SARRGPGPGPGAAARA. Residues Asn-320 and Asn-401 are each glycosylated (N-linked (GlcNAc...) asparagine). 2 disordered regions span residues 564-587 and 816-867; these read RRSA…ANRG and GRDE…PVPP. The segment covering 843–854 has biased composition (low complexity); it reads GAGPPGTAIPAG. A helical transmembrane segment spans residues 895-915; the sequence is LLGVFCLAILVFLINCIVFVL. Residues 916-1074 are Cytoplasmic-facing; it reads RYRHKRIPPE…NYMRRIKDIA (159 aa). Positions 962–1064 are disordered; the sequence is VPACCHGDHH…TRPTPPPDLH (103 aa). 2 stretches are compositionally biased toward low complexity: residues 973–985 and 1016–1026; these read SGSS…SQVH and FTTFTTLPTEE. Residues 1035–1044 show a composition bias toward acidic residues; sequence GEEEDEEEDL.

Belongs to the TMEM132 family. As to expression, widely expressed, with highest levels in the cochlea. In the cochlea, detected in spiral ganglion, the organ of Corti and stria vascularis. In the organ of Corti, prominently expressed in the outer and inner hair cells, especially at the apical and basal region of the outer hair cell body (at protein level).

The protein localises to the membrane. Functionally, required for normal inner ear hair cell function and hearing. The sequence is that of Transmembrane protein 132E (Tmem132e) from Mus musculus (Mouse).